Reading from the N-terminus, the 522-residue chain is Berberine bridge enzyme-like Cyn d 4 (522 aa).

The first 25 residues, 1 to 25, serve as a signal peptide directing secretion; the sequence is MARSRAFAFALLICAVAASCHVALS. A disulfide bridge links Cys41 with Cys98. Residues 76–252 form the FAD-binding PCMH-type domain; the sequence is KTVKPLYIIT…ASWQVKLLPV (177 aa). Asn88 carries N-linked (GlcNAc...) asparagine glycosylation. FAD-binding positions include 108–114, Ser119, Ser152, 176–177, 181–185, Phe191, Glu237, and Val242; these read VRSGGHD, VC, and GVGGH. The segment at residues 113 to 177 is a cross-link (6-(S-cysteinyl)-8alpha-(pros-histidyl)-FAD (His-Cys)); sequence HDYEGLSYRS…PKLGFPAGVC (65 aa). Residues Cys308 and Cys329 are joined by a disulfide bond. N-linked (GlcNAc...) asparagine glycosylation is found at Asn325 and Asn354. 461–465 contacts FAD; it reads YVNYR. N-linked (GlcNAc...) asparagine glycosylation occurs at Asn477.

This sequence belongs to the oxygen-dependent FAD-linked oxidoreductase family. In terms of assembly, monomer. FAD serves as cofactor. In terms of processing, the FAD cofactor is bound via a bicovalent 6-S-cysteinyl, 8alpha-N1-histidyl FAD linkage. The N-terminus is blocked. Post-translationally, glycosylated. N-glycosylated. Contains fucose, N-acetylglucosamine, and mannose as main carbohydrates (in a ratio of approximately 3:2:1), and a minute amount of xylose. The two most abundant oligosaccharides are Fuc(1)GlcNAc(2)Man(3) and Fuc(1)GlcNAc(2)Man(2), together comprising about 80% of the total carbohydrate content. They are structurally unusual in having a L-Fuc alpha-(1,3)-linked to Asn-linked GlcNAc without a Xyl beta-(1,2)-linked to the branching Man. The other oligosaccharides make up only 9% of the total carbohydrate content and are characterized by the presence of Xyl beta-(1,2)-linked to the branching Man. In terms of tissue distribution, expressed in pollen (at protein level).

The chain is Berberine bridge enzyme-like Cyn d 4 from Cynodon dactylon (Bermuda grass).